We begin with the raw amino-acid sequence, 314 residues long: E3 ubiquitin-protein ligase CHIP (314 aa).

Basic and acidic residues predominate over residues 1–11 (MKGKEEREREG). The interval 1-47 (MKGKEEREREGGGGAVGPGAAGPGAGGGSPEKSHSAQEHKEQGNRLF) is disordered. Residues 12–29 (GGGAVGPGAAGPGAGGGS) show a composition bias toward gly residues. Over residues 31 to 43 (EKSHSAQEHKEQG) the composition is skewed to basic and acidic residues. TPR repeat units follow at residues 36 to 69 (AQEH…NPLV), 70 to 103 (AVYY…DGQS), and 105 to 137 (KAHF…AKEQ). Residues 237–311 (DIPDYLCGKI…DAFISENGWV (75 aa)) form the U-box domain.

In terms of assembly, homodimer.

The protein localises to the cytoplasm. It localises to the nucleus. It is found in the mitochondrion. The enzyme catalyses S-ubiquitinyl-[E2 ubiquitin-conjugating enzyme]-L-cysteine + [acceptor protein]-L-lysine = [E2 ubiquitin-conjugating enzyme]-L-cysteine + N(6)-ubiquitinyl-[acceptor protein]-L-lysine.. Functionally, E3 ubiquitin-protein ligase which targets misfolded chaperone substrates towards proteasomal degradation. Collaborates with ATXN3 in the degradation of misfolded chaperone substrates: ATXN3 restricting the length of ubiquitin chain attached to STUB1/CHIP substrates and preventing further chain extension. The sequence is that of E3 ubiquitin-protein ligase CHIP from Gallus gallus (Chicken).